A 166-amino-acid chain; its full sequence is Cytochrome P450 regulator dap1 (166 aa).

Residues 4 to 21 (TQVVFIVTLFLYLLITRW) form a helical membrane-spanning segment. Residues 42–145 (DYTPAELKEY…QKYQAVGRLI (104 aa)) form the Cytochrome b5 heme-binding domain. The residue at position 108 (S108) is a Phosphoserine. Residue Y138 coordinates heme.

The protein belongs to the cytochrome b5 family. MAPR subfamily. Interacts with erg5 and erg11.

Its subcellular location is the endoplasmic reticulum. It is found in the membrane. Functionally, required for sterol biosynthesis. Functions as a positive regulator of cytochrome P450 enzymes erg5 and erg11. Function requires bound heme. In Schizosaccharomyces pombe (strain 972 / ATCC 24843) (Fission yeast), this protein is Cytochrome P450 regulator dap1 (dap1).